Consider the following 443-residue polypeptide: ATP-dependent protease ATPase subunit HslU (443 aa).

Residues Ile-18, 60–65 (GVGKTE), Asp-256, Glu-321, and Arg-393 each bind ATP.

It belongs to the ClpX chaperone family. HslU subfamily. As to quaternary structure, a double ring-shaped homohexamer of HslV is capped on each side by a ring-shaped HslU homohexamer. The assembly of the HslU/HslV complex is dependent on binding of ATP.

It localises to the cytoplasm. In terms of biological role, ATPase subunit of a proteasome-like degradation complex; this subunit has chaperone activity. The binding of ATP and its subsequent hydrolysis by HslU are essential for unfolding of protein substrates subsequently hydrolyzed by HslV. HslU recognizes the N-terminal part of its protein substrates and unfolds these before they are guided to HslV for hydrolysis. This chain is ATP-dependent protease ATPase subunit HslU, found in Escherichia coli O157:H7 (strain EC4115 / EHEC).